A 309-amino-acid polypeptide reads, in one-letter code: Olfactory receptor 5B2 (309 aa).

Residues 1–23 (MENCTEVTKFILLGLTSVPELQI) are Extracellular-facing. N-linked (GlcNAc...) asparagine glycosylation is present at N3. The helical transmembrane segment at 24-47 (PLFILFTFIYLLTLCGNLGMMLLI) threads the bilayer. Over 48 to 55 (LMDSCLHT) the chain is Cytoplasmic. Residues 56 to 77 (PMYFFLSNLSLVDFGYSSAVTP) traverse the membrane as a helical segment. The Extracellular portion of the chain corresponds to 78 to 98 (KVMAGFLRGDKVISYNACAVQ). An intrachain disulfide couples C95 to C187. The chain crosses the membrane as a helical span at residues 99–118 (MFFFVALATVENYLLASMAY). Topologically, residues 119–137 (DRYAAVCKPLHYTTTMTAS) are cytoplasmic. The chain crosses the membrane as a helical span at residues 138-156 (VGACLALGSYVCGFLNASF). Topologically, residues 157-193 (HIGGIFSLSFCKSNLVHHFFCDVPAVMALSCSDKHTS) are extracellular. The helical transmembrane segment at 194-217 (EVILVFMSSFNIFFVLLVIFISYL) threads the bilayer. The Cytoplasmic portion of the chain corresponds to 218–234 (FIFITILKMHSAKGHQK). Residues 235–257 (ALSTCASHFTAVSVFYGTVIFIY) form a helical membrane-spanning segment. The Extracellular segment spans residues 258–270 (LQPSSSHSMDTDK). A helical transmembrane segment spans residues 271–290 (MASVFYAMIIPMLNPVVYSL). Over 291 to 309 (RNREVQNAFKKVLRRQKFL) the chain is Cytoplasmic.

The protein belongs to the G-protein coupled receptor 1 family.

Its subcellular location is the cell membrane. Functionally, odorant receptor. The chain is Olfactory receptor 5B2 (OR5B2) from Homo sapiens (Human).